Consider the following 275-residue polypeptide: Putative phosphoenolpyruvate synthase regulatory protein (275 aa).

153–160 (GVSRTGKT) contributes to the ADP binding site.

Belongs to the pyruvate, phosphate/water dikinase regulatory protein family. PSRP subfamily.

The enzyme catalyses [pyruvate, water dikinase] + ADP = [pyruvate, water dikinase]-phosphate + AMP + H(+). It catalyses the reaction [pyruvate, water dikinase]-phosphate + phosphate + H(+) = [pyruvate, water dikinase] + diphosphate. Bifunctional serine/threonine kinase and phosphorylase involved in the regulation of the phosphoenolpyruvate synthase (PEPS) by catalyzing its phosphorylation/dephosphorylation. The polypeptide is Putative phosphoenolpyruvate synthase regulatory protein (Nitrosomonas europaea (strain ATCC 19718 / CIP 103999 / KCTC 2705 / NBRC 14298)).